A 149-amino-acid chain; its full sequence is Large ribosomal subunit protein bL9 (149 aa).

It belongs to the bacterial ribosomal protein bL9 family.

Its function is as follows. Binds to the 23S rRNA. This is Large ribosomal subunit protein bL9 from Vibrio cholerae serotype O1 (strain ATCC 39541 / Classical Ogawa 395 / O395).